The following is a 111-amino-acid chain: Probable 4-amino-4-deoxy-L-arabinose-phosphoundecaprenol flippase subunit ArnE (111 aa).

Helical transmembrane passes span Trp-39–Gln-59, Val-61–Ala-81, and Val-89–Val-109. The 70-residue stretch at Leu-40 to Val-109 folds into the EamA domain.

This sequence belongs to the ArnE family. In terms of assembly, heterodimer of ArnE and ArnF.

It is found in the cell inner membrane. Its pathway is bacterial outer membrane biogenesis; lipopolysaccharide biosynthesis. In terms of biological role, translocates 4-amino-4-deoxy-L-arabinose-phosphoundecaprenol (alpha-L-Ara4N-phosphoundecaprenol) from the cytoplasmic to the periplasmic side of the inner membrane. The polypeptide is Probable 4-amino-4-deoxy-L-arabinose-phosphoundecaprenol flippase subunit ArnE (Sodalis glossinidius (strain morsitans)).